We begin with the raw amino-acid sequence, 211 residues long: Ribonuclease P protein component 3 (211 aa).

It belongs to the eukaryotic/archaeal RNase P protein component 3 family. In terms of assembly, consists of a catalytic RNA component and at least 4-5 protein subunits.

Its subcellular location is the cytoplasm. The enzyme catalyses Endonucleolytic cleavage of RNA, removing 5'-extranucleotides from tRNA precursor.. Its function is as follows. Part of ribonuclease P, a protein complex that generates mature tRNA molecules by cleaving their 5'-ends. The protein is Ribonuclease P protein component 3 of Aeropyrum pernix (strain ATCC 700893 / DSM 11879 / JCM 9820 / NBRC 100138 / K1).